The primary structure comprises 552 residues: CTP synthase (552 aa).

Residues 1–270 (MTKFVFVTGG…DGLICDKLRL (270 aa)) are amidoligase domain. Residue Ser13 coordinates CTP. Ser13 lines the UTP pocket. Residues 14-19 (SLGKGI) and Asp71 contribute to the ATP site. Residues Asp71 and Glu144 each coordinate Mg(2+). CTP is bound by residues 151-153 (DIE), 191-196 (KTKPTQ), and Lys227. Residues 191–196 (KTKPTQ) and Lys227 contribute to the UTP site. Residues 295 to 548 (KIAMVGKYVE…VKAAIERQKA (254 aa)) enclose the Glutamine amidotransferase type-1 domain. Gly357 contributes to the L-glutamine binding site. Cys384 acts as the Nucleophile; for glutamine hydrolysis in catalysis. L-glutamine is bound by residues 385 to 388 (LGMQ), Glu408, and Arg474. Residues His521 and Glu523 contribute to the active site.

The protein belongs to the CTP synthase family. As to quaternary structure, homotetramer.

The catalysed reaction is UTP + L-glutamine + ATP + H2O = CTP + L-glutamate + ADP + phosphate + 2 H(+). It catalyses the reaction L-glutamine + H2O = L-glutamate + NH4(+). It carries out the reaction UTP + NH4(+) + ATP = CTP + ADP + phosphate + 2 H(+). It functions in the pathway pyrimidine metabolism; CTP biosynthesis via de novo pathway; CTP from UDP: step 2/2. Its activity is regulated as follows. Allosterically activated by GTP, when glutamine is the substrate; GTP has no effect on the reaction when ammonia is the substrate. The allosteric effector GTP functions by stabilizing the protein conformation that binds the tetrahedral intermediate(s) formed during glutamine hydrolysis. Inhibited by the product CTP, via allosteric rather than competitive inhibition. Catalyzes the ATP-dependent amination of UTP to CTP with either L-glutamine or ammonia as the source of nitrogen. Regulates intracellular CTP levels through interactions with the four ribonucleotide triphosphates. This Delftia acidovorans (strain DSM 14801 / SPH-1) protein is CTP synthase.